A 246-amino-acid chain; its full sequence is ATP synthase subunit a (246 aa).

The next 5 helical transmembrane spans lie at 34 to 54 (GQTMITTWVVMLLLIGLTFIG), 92 to 112 (WVPLIGTIFLFVLFANWLGQL), 130 to 150 (DINTTVALSLIALVSYIYAGL), 155 to 175 (FGYFKHYFESPILAAVWVLEF), and 196 to 216 (VVAVLILLVPILVPVPLMILF).

Belongs to the ATPase A chain family. F-type ATPases have 2 components, CF(1) - the catalytic core - and CF(0) - the membrane proton channel. CF(1) has five subunits: alpha(3), beta(3), gamma(1), delta(1), epsilon(1). CF(0) has four main subunits: a, b, b' and c.

The protein resides in the cell inner membrane. Key component of the proton channel; it plays a direct role in the translocation of protons across the membrane. In Gloeobacter violaceus (strain ATCC 29082 / PCC 7421), this protein is ATP synthase subunit a.